Consider the following 234-residue polypeptide: 2,3,4,5-tetrahydropyridine-2,6-dicarboxylate N-acetyltransferase (234 aa).

It belongs to the transferase hexapeptide repeat family. DapH subfamily.

The catalysed reaction is (S)-2,3,4,5-tetrahydrodipicolinate + acetyl-CoA + H2O = L-2-acetamido-6-oxoheptanedioate + CoA. Its pathway is amino-acid biosynthesis; L-lysine biosynthesis via DAP pathway; LL-2,6-diaminopimelate from (S)-tetrahydrodipicolinate (acetylase route): step 1/3. Functionally, catalyzes the transfer of an acetyl group from acetyl-CoA to tetrahydrodipicolinate. The chain is 2,3,4,5-tetrahydropyridine-2,6-dicarboxylate N-acetyltransferase from Leuconostoc citreum (strain KM20).